A 96-amino-acid chain; its full sequence is MPRAYETMLIVRPDLSDEPLEQLLSSQEAILRENGVTHVEITNRGKRRFAGFEMKKFKEGLYIQFNYEAEPNAVAAWEKNLRINESVLRHMTLRVG.

The protein belongs to the bacterial ribosomal protein bS6 family.

Functionally, binds together with bS18 to 16S ribosomal RNA. The protein is Small ribosomal subunit protein bS6 of Synechococcus sp. (strain JA-2-3B'a(2-13)) (Cyanobacteria bacterium Yellowstone B-Prime).